The following is a 438-amino-acid chain: Dol-P-Man:Man(5)GlcNAc(2)-PP-Dol alpha-1,3-mannosyltransferase (438 aa).

Ser-13 carries the phosphoserine modification. Transmembrane regions (helical) follow at residues 41–61, 95–115, 123–143, 149–169, 172–192, 203–223, 231–251, 289–309, 332–352, 356–376, and 407–427; these read YTLL…FWVI, TGPL…FYAT, MAQN…FLIY, VPPF…SIFV, LFND…FLAQ, LAVS…FLLL, ALPK…PFLL, FHLA…LCRW, ALTP…GICF, LHYQ…WAMP, and AALH…PESF.

Belongs to the glycosyltransferase ALG3 family.

Its subcellular location is the endoplasmic reticulum membrane. The catalysed reaction is an alpha-D-Man-(1-&gt;2)-alpha-D-Man-(1-&gt;2)-alpha-D-Man-(1-&gt;3)-[alpha-D-Man-(1-&gt;6)]-beta-D-Man-(1-&gt;4)-beta-D-GlcNAc-(1-&gt;4)-alpha-D-GlcNAc-diphospho-di-trans,poly-cis-dolichol + a di-trans,poly-cis-dolichyl beta-D-mannosyl phosphate = an alpha-D-Man-(1-&gt;2)-alpha-D-Man-(1-&gt;2)-alpha-D-Man-(1-&gt;3)-[alpha-D-Man-(1-&gt;3)-alpha-D-Man-(1-&gt;6)]-beta-D-Man-(1-&gt;4)-beta-D-GlcNAc-(1-&gt;4)-alpha-D-GlcNAc-diphospho-di-trans,poly-cis-dolichol + a di-trans,poly-cis-dolichyl phosphate + H(+). The protein operates within protein modification; protein glycosylation. Dol-P-Man:Man(5)GlcNAc(2)-PP-Dol alpha-1,3-mannosyltransferase that operates in the biosynthetic pathway of dolichol-linked oligosaccharides, the glycan precursors employed in protein asparagine (N)-glycosylation. The assembly of dolichol-linked oligosaccharides begins on the cytosolic side of the endoplasmic reticulum membrane and finishes in its lumen. The sequential addition of sugars to dolichol pyrophosphate produces dolichol-linked oligosaccharides containing fourteen sugars, including two GlcNAcs, nine mannoses and three glucoses. Once assembled, the oligosaccharide is transferred from the lipid to nascent proteins by oligosaccharyltransferases. In the lumen of the endoplasmic reticulum, adds the first dolichyl beta-D-mannosyl phosphate derived mannose in an alpha-1,3 linkage to Man(5)GlcNAc(2)-PP-dolichol to produce Man(6)GlcNAc(2)-PP-dolichol. Man(6)GlcNAc(2)-PP-dolichol is a substrate for ALG9, the following enzyme in the biosynthetic pathway. The sequence is that of Dol-P-Man:Man(5)GlcNAc(2)-PP-Dol alpha-1,3-mannosyltransferase from Mus musculus (Mouse).